We begin with the raw amino-acid sequence, 563 residues long: Arginine--tRNA ligase (563 aa).

The short motif at 119–129 (ANPTGPLHVGR) is the 'HIGH' region element.

Belongs to the class-I aminoacyl-tRNA synthetase family.

It is found in the cytoplasm. The enzyme catalyses tRNA(Arg) + L-arginine + ATP = L-arginyl-tRNA(Arg) + AMP + diphosphate. The sequence is that of Arginine--tRNA ligase from Methanocella arvoryzae (strain DSM 22066 / NBRC 105507 / MRE50).